The sequence spans 409 residues: F-box/kelch-repeat protein At1g48625 (409 aa).

An F-box domain is found at 2–49 (ATMISNLPRDLMEEILSRVPLKSMRAVRLTCKNWHTLSITISESLAKM). 2 Kelch repeats span residues 169–218 (FIDY…LKGN) and 221–266 (WCAR…ILSC).

The sequence is that of F-box/kelch-repeat protein At1g48625 from Arabidopsis thaliana (Mouse-ear cress).